We begin with the raw amino-acid sequence, 469 residues long: Relaxin-3 receptor 1 (469 aa).

The Extracellular segment spans residues 1–81 (MQMADAATIA…ESADTEARVR (81 aa)). 2 N-linked (GlcNAc...) asparagine glycosylation sites follow: Asn-36 and Asn-40. A helical transmembrane segment spans residues 82 to 102 (ILISVVYWVVCALGLAGNLLV). Residues 103 to 119 (LYLMKSMQGWRKSSINL) are Cytoplasmic-facing. Residues 120 to 140 (FVTNLALTDFQFVLTLPFWAV) traverse the membrane as a helical segment. Topologically, residues 141-156 (ENALDFKWPFGKAMCK) are extracellular. An intrachain disulfide couples Cys-155 to Cys-247. A helical transmembrane segment spans residues 157–177 (IVSMVTSMNMYASVFFLTAMS). Topologically, residues 178-215 (VTRYHSVASALKSHRTRGHGRGDCCGRSLGDSCCFSAK) are cytoplasmic. Residues 216 to 236 (ALCVWIWALAALASLPSAIFS) form a helical membrane-spanning segment. The Extracellular segment spans residues 237-270 (TTVKVMGEELCLVRFPDKLLGRDRQFWLGLYHSQ). The helical transmembrane segment at 271 to 291 (KVLLGFVLPLGIIILCYLLLV) threads the bilayer. The Cytoplasmic segment spans residues 292–329 (RFIADRRAAGTKGGAAVAGGRPTGASARRLSKVTKSVT). The helical transmembrane segment at 330–350 (IVVLSFFLCWLPNQALTTWSI) threads the bilayer. The Extracellular portion of the chain corresponds to 351-356 (LIKFNA). The helical transmembrane segment at 357-377 (VPFSQEYFLCQVYAFPVSVCL) threads the bilayer. Residues 378-469 (AHSNSCLNPV…YDLLPSSSAY (92 aa)) lie on the Cytoplasmic side of the membrane.

This sequence belongs to the G-protein coupled receptor 1 family. Expressed predominantly in brain regions. Highest expression in substantia nigra and pituitary, followed by hippocampus, spinal cord, amygdala, caudate nucleus and corpus callosum, quite low level in cerebellum. In peripheral tissues, relatively high levels in adrenal glands, low levels in pancreas, salivary gland, placenta, mammary gland and testis.

It is found in the cell membrane. In terms of biological role, receptor for RNL3/relaxin-3. Binding of the ligand inhibit cAMP accumulation. The polypeptide is Relaxin-3 receptor 1 (RXFP3) (Homo sapiens (Human)).